The chain runs to 453 residues: Armadillo repeat-containing X-linked protein 1 (453 aa).

The Mitochondrial intermembrane portion of the chain corresponds to 1–6 (MGRTRE). Mitochondrion outer membrane (MOM)-targeting sequence stretches follow at residues 1 to 6 (MGRTRE) and 26 to 36 (RLAWGRDENEK). A helical; Signal-anchor membrane pass occupies residues 7–29 (AGCVAAGVVIGAGACYCVYRLAW). The Cytoplasmic portion of the chain corresponds to 30–453 (GRDENEKIWD…VKVLKVLTKL (424 aa)). A disordered region spans residues 140–182 (PSLPCPGGRGGGCHPTRSGSRAGGRASGKSKGKARSKSTRAPA). A compositionally biased stretch (basic residues) spans 167–177 (GKSKGKARSKS). ARM repeat units lie at residues 195 to 235 (PYKI…NNAA), 237 to 276 (SFNQ…NLSV), 358 to 398 (PAMT…NIND), and 415 to 453 (SSLF…LTKL).

The protein belongs to the eutherian X-chromosome-specific Armcx family. As to quaternary structure, interacts with MIRO1.

It is found in the mitochondrion. Its subcellular location is the mitochondrion outer membrane. Regulates mitochondrial transport during axon regeneration. Increases the proportion of motile mitochondria by recruiting stationary mitochondria into the motile pool. Enhances mitochondria movement and neurite growth in both adult axons and embryonic neurons. Promotes neuronal survival and axon regeneration after nerve injury. May link mitochondria to the Trak1-kinesin motor complex via its interaction with MIRO1. The protein is Armadillo repeat-containing X-linked protein 1 (ARMCX1) of Pongo abelii (Sumatran orangutan).